Consider the following 512-residue polypeptide: Flavonoid 3'-monooxygenase (512 aa).

The chain crosses the membrane as a helical span at residues 1-21 (MEILSLILYTVIFSFLLQFIL). At 22 to 512 (RSFFRKRYPL…PRLEAQAYIG (491 aa)) the chain is on the cytoplasmic side. Cys447 provides a ligand contact to heme.

This sequence belongs to the cytochrome P450 family. Heme serves as cofactor. In terms of tissue distribution, high expression in petals and ovaries and to a lower extent in sepals, pedicels, anthers and stems. Not detected in leaves, style or roots.

The protein resides in the endoplasmic reticulum membrane. It catalyses the reaction a 3'-unsubstituted flavone + reduced [NADPH--hemoprotein reductase] + O2 = a 3'-hydroxyflavone + oxidized [NADPH--hemoprotein reductase] + H2O + H(+). The protein operates within secondary metabolite biosynthesis; flavonoid biosynthesis. Catalyzes the 3'-hydroxylation of the flavonoid B-ring to the 3',4'-hydroxylated state. Convert naringenin to eriodictyol and dihydrokaempferol to dihydroquercetin. In Petunia hybrida (Petunia), this protein is Flavonoid 3'-monooxygenase (CYP75B2).